The primary structure comprises 241 residues: Small ribosomal subunit protein uS3 (241 aa).

A KH type-2 domain is found at 39 to 109; that stretch reads IRQHVEKNLS…QIRINVIEVS (71 aa). The segment at 215-241 is disordered; it reads EQAMAAPAPTPRKKRRPQQFEDRSNEE. The segment covering 232 to 241 has biased composition (basic and acidic residues); the sequence is QQFEDRSNEE.

Belongs to the universal ribosomal protein uS3 family. As to quaternary structure, part of the 30S ribosomal subunit. Forms a tight complex with proteins S10 and S14.

Its function is as follows. Binds the lower part of the 30S subunit head. Binds mRNA in the 70S ribosome, positioning it for translation. This chain is Small ribosomal subunit protein uS3, found in Crocosphaera subtropica (strain ATCC 51142 / BH68) (Cyanothece sp. (strain ATCC 51142)).